Consider the following 314-residue polypeptide: Olfactory receptor 1E1 (314 aa).

The Extracellular segment spans residues 1–25 (MMGQNQTSISDFLLLGLPIQPEQQN). Asparagine 5 is a glycosylation site (N-linked (GlcNAc...) asparagine). Residues 26–49 (LCYALFLAMYLTTLLGNLLIIVLI) traverse the membrane as a helical segment. At 50-57 (RLDSHLHT) the chain is on the cytoplasmic side. A helical transmembrane segment spans residues 58–79 (PMYLFLSNLSFSDLCFSSVTIP). At 80 to 100 (KLLQNMQNQDPSIPYADCLTQ) the chain is on the extracellular side. Cysteines 97 and 189 form a disulfide. A helical membrane pass occupies residues 101–120 (MYFFLLFGDLESFLLVAMAY). Topologically, residues 121–139 (DRYVAICFALHYTAIMSPM) are cytoplasmic. Residues 140-158 (LCLSLVALSWVLTTFHAML) form a helical membrane-spanning segment. Residues 159 to 195 (HTLLMARLCFCADNVIPHFFCDMSALLKLACSDTRVN) are Extracellular-facing. The helical transmembrane segment at 196–219 (EWVIFIMGGLIVVIPFLLILGSYA) threads the bilayer. Over 220–236 (RIVSSILKVPSSKGICK) the chain is Cytoplasmic. Residues 237–259 (AFSTCGSHLSVVSLFYGTVIGLY) traverse the membrane as a helical segment. Over 260–272 (LCPSANSSTLKET) the chain is Extracellular. The chain crosses the membrane as a helical span at residues 273–292 (VMAMMYTVVTPMLNPFIYSL). Topologically, residues 293–314 (RNGDMKGALSRVIHQKKTFFSL) are cytoplasmic.

It belongs to the G-protein coupled receptor 1 family.

The protein localises to the cell membrane. Functionally, odorant receptor. This is Olfactory receptor 1E1 (OR1E1) from Gorilla gorilla gorilla (Western lowland gorilla).